A 546-amino-acid polypeptide reads, in one-letter code: Carboxylic ester hydrolase FVEG_12634 (546 aa).

Residues 72–91 (FTDGTKICPQPPSSNTPDPS) are disordered. Serine 214 acts as the Acyl-ester intermediate in catalysis.

The protein belongs to the type-B carboxylesterase/lipase family.

The catalysed reaction is a carboxylic ester + H2O = an alcohol + a carboxylate + H(+). In terms of biological role, carboxylic ester hydrolase; part of the Fusarium detoxification of benzoxazolinone cluster 2 (FDB2) involved in the degradation of benzoxazolinones produced by the host plant. Maize, wheat, and rye produce the 2 benzoxazinone phytoanticipins 2,4-dihy-droxy-7-methoxy-1,4-benzoxazin-3-one (DIMBOA) and 2,4-dihydroxy-1,4-benzoxazin-3-one (DIBOA) that, due to their inherent instability once released, spontaneously degrade to the more stable corresponding benzoxazolinones, 6-methoxy-2-benzoxazolinone (MBOA) and 2-benzoxazolinone (BOA), respectively. The first step in the detoxification of benzoxazolinones involves the hydrolysis of the cyclic ester bond of benzoxazolinones by the FDB1 cluster gamma-lactamase MBL1 to aminophenols. MBL1 is able to convert BOA into 2-aminophenol (2-AP), as well as MBOA into 5-methoxy-2-aminophenol (2-AMP). The FDB2 cluster N-malonyltransferase FDB2/NAT1 then metabolizes aminophenols via N-malonylation to non-toxic malonamic acids. FDB2/NAT1 converts 2-AP into N-(2-hydroxyphenyl) malonamic acid (HPMA) and 2-AMP into N-(2-hydroxy-4-methoxyphenyl) malonamic acid (HMPMA). The duplicated dienlactone hydrolases DLH1 and DLH2 may provide redundant function for hydrolyzing the lactone moiety in the BOA molecule. The roles of the amidases an other enzymes encoded by the 2 FDB clusters have not been identified so far. The protein is Carboxylic ester hydrolase FVEG_12634 of Gibberella moniliformis (strain M3125 / FGSC 7600) (Maize ear and stalk rot fungus).